A 102-amino-acid polypeptide reads, in one-letter code: MYAIIKTGGKQLKVEAGQTIYVEKLDAKEGDKVTFDKVVFVGGDKTVIGTPFVEGATVEATVEKQGRAKKVVTFKYKPKKHQHTKQGHRQPYTKVVIDAINA.

It belongs to the bacterial ribosomal protein bL21 family. In terms of assembly, part of the 50S ribosomal subunit. Contacts protein L20.

Functionally, this protein binds to 23S rRNA in the presence of protein L20. The sequence is that of Large ribosomal subunit protein bL21 from Ligilactobacillus salivarius (strain UCC118) (Lactobacillus salivarius).